A 130-amino-acid chain; its full sequence is Small ribosomal subunit protein uS8 (130 aa).

It belongs to the universal ribosomal protein uS8 family. Part of the 30S ribosomal subunit.

One of the primary rRNA binding proteins, it binds directly to 16S rRNA central domain where it helps coordinate assembly of the platform of the 30S subunit. The polypeptide is Small ribosomal subunit protein uS8 (Methanothermobacter thermautotrophicus (strain ATCC 29096 / DSM 1053 / JCM 10044 / NBRC 100330 / Delta H) (Methanobacterium thermoautotrophicum)).